Here is a 319-residue protein sequence, read N- to C-terminus: Acetyl-coenzyme A carboxylase carboxyl transferase subunit alpha (319 aa).

One can recognise a CoA carboxyltransferase C-terminal domain in the interval 35–296 (NIDEEVHRLR…KAQLLADLAD (262 aa)).

The protein belongs to the AccA family. As to quaternary structure, acetyl-CoA carboxylase is a heterohexamer composed of biotin carboxyl carrier protein (AccB), biotin carboxylase (AccC) and two subunits each of ACCase subunit alpha (AccA) and ACCase subunit beta (AccD).

It localises to the cytoplasm. It carries out the reaction N(6)-carboxybiotinyl-L-lysyl-[protein] + acetyl-CoA = N(6)-biotinyl-L-lysyl-[protein] + malonyl-CoA. It functions in the pathway lipid metabolism; malonyl-CoA biosynthesis; malonyl-CoA from acetyl-CoA: step 1/1. Component of the acetyl coenzyme A carboxylase (ACC) complex. First, biotin carboxylase catalyzes the carboxylation of biotin on its carrier protein (BCCP) and then the CO(2) group is transferred by the carboxyltransferase to acetyl-CoA to form malonyl-CoA. The protein is Acetyl-coenzyme A carboxylase carboxyl transferase subunit alpha of Shigella sonnei (strain Ss046).